A 286-amino-acid chain; its full sequence is Protein HEXIM2 (286 aa).

Over residues 1 to 11 the composition is skewed to polar residues; it reads MMATPNQTACN. The interval 1-195 is disordered; that stretch reads MMATPNQTAC…GEFQRKDFSE (195 aa). A Phosphoserine modification is found at Ser-29. Position 32 is a phosphothreonine (Thr-32). A Phosphoserine modification is found at Ser-39. At Thr-46 the chain carries Phosphothreonine. Phosphoserine is present on residues Ser-51, Ser-53, Ser-71, Ser-76, and Ser-81. Over residues 68-78 the composition is skewed to polar residues; sequence NSRSPRTQSPG. A compositionally biased stretch (basic residues) spans 87 to 103; that stretch reads ARKKHRRRPSKRKRHWR. The segment covering 113–132 has biased composition (basic and acidic residues); sequence KQQRDERQSQRASRVREEMF. Positions 140-143 are interaction with P-TEFb; that stretch reads PYNT. The segment covering 178-195 has biased composition (basic and acidic residues); that stretch reads SDGRGRAHGEFQRKDFSE. Residues 207–277 adopt a coiled-coil conformation; it reads GRSKQELVRD…QENQMWNREG (71 aa). The segment at 226-286 is interaction with CCNT1, HEXIM1 and HEXIM2; the sequence is QAEEETRRLQ…GCRCDEEPGT (61 aa).

Belongs to the HEXIM family. In terms of assembly, homooligomer and heterooligomer with HEXIM1; probably dimeric. Core component of the 7SK RNP complex, at least composed of 7SK RNA, LARP7, MEPCE, HEXIM1 (or HEXIM2) and P-TEFb (composed of CDK9 and CCNT1/cyclin-T1). Interacts with CCNT2. Ubiquitously expressed with higher expression in testis. HEXIM1 and HEXIM2 are differentially expressed.

It localises to the nucleus. Transcriptional regulator which functions as a general RNA polymerase II transcription inhibitor. Core component of the 7SK RNP complex: in cooperation with 7SK snRNA sequesters P-TEFb in a large inactive 7SK snRNP complex preventing RNA polymerase II phosphorylation and subsequent transcriptional elongation. In Homo sapiens (Human), this protein is Protein HEXIM2 (HEXIM2).